The chain runs to 410 residues: Argininosuccinate synthase (410 aa).

Residues 11–19 and Ala-37 contribute to the ATP site; that span reads AYSGGLDTS. Positions 88 and 93 each coordinate L-citrulline. Residue 116–124 participates in ATP binding; that stretch reads SHGCTGKGN. Residues Thr-120, Asn-124, and Asp-125 each contribute to the L-aspartate site. Asn-124 provides a ligand contact to L-citrulline. Arg-128, Ser-181, Ser-190, Glu-269, and Tyr-281 together coordinate L-citrulline.

Belongs to the argininosuccinate synthase family. Type 1 subfamily. Homotetramer.

It is found in the cytoplasm. The catalysed reaction is L-citrulline + L-aspartate + ATP = 2-(N(omega)-L-arginino)succinate + AMP + diphosphate + H(+). Its pathway is amino-acid biosynthesis; L-arginine biosynthesis; L-arginine from L-ornithine and carbamoyl phosphate: step 2/3. This is Argininosuccinate synthase (arg12) from Schizosaccharomyces pombe (strain 972 / ATCC 24843) (Fission yeast).